The sequence spans 209 residues: Putative 3-methyladenine DNA glycosylase (209 aa).

Positions 189 to 209 (HVSTTRLGAPKKKRQKRLERR) are disordered. Basic residues predominate over residues 197–209 (APKKKRQKRLERR).

It belongs to the DNA glycosylase MPG family.

The protein is Putative 3-methyladenine DNA glycosylase of Chlorobaculum parvum (strain DSM 263 / NCIMB 8327) (Chlorobium vibrioforme subsp. thiosulfatophilum).